Reading from the N-terminus, the 121-residue chain is Large ribosomal subunit protein bL20 (121 aa).

It belongs to the bacterial ribosomal protein bL20 family.

Binds directly to 23S ribosomal RNA and is necessary for the in vitro assembly process of the 50S ribosomal subunit. It is not involved in the protein synthesizing functions of that subunit. This is Large ribosomal subunit protein bL20 from Orientia tsutsugamushi (strain Boryong) (Rickettsia tsutsugamushi).